The chain runs to 75 residues: uncharacterized protein (75 aa).

An N-terminal signal peptide occupies residues 1–21 (MRLIVVSIMVTLLSGCGSIIS).

This sequence to E.coli YidQ.

This is an uncharacterized protein from Escherichia coli O157:H7.